The following is a 371-amino-acid chain: Probable protein phosphatase 2C 11 (371 aa).

A helical transmembrane segment spans residues 29-49 (FFFFLFNSQTISSFIIFYLFL). A disordered region spans residues 67–95 (PPLSVAPLRGDANSPPPESSSSPATKSSL). Residues 85 to 94 (SSSSPATKSS) are compositionally biased toward low complexity. The PPM-type phosphatase domain occupies 123 to 368 (SYGYSSLKGK…DNITCIVVRF (246 aa)). 4 residues coordinate Mn(2+): D159, G160, D320, and D359.

This sequence belongs to the PP2C family. The cofactor is Mg(2+). Mn(2+) serves as cofactor.

It is found in the membrane. It carries out the reaction O-phospho-L-seryl-[protein] + H2O = L-seryl-[protein] + phosphate. The catalysed reaction is O-phospho-L-threonyl-[protein] + H2O = L-threonyl-[protein] + phosphate. This chain is Probable protein phosphatase 2C 11, found in Arabidopsis thaliana (Mouse-ear cress).